The chain runs to 171 residues: ATP synthase subunit b (171 aa).

Residues 26 to 48 traverse the membrane as a helical segment; it reads LINLAIIIGLLVYAGRGFLGNLL.

The protein belongs to the ATPase B chain family. In terms of assembly, F-type ATPases have 2 components, F(1) - the catalytic core - and F(0) - the membrane proton channel. F(1) has five subunits: alpha(3), beta(3), gamma(1), delta(1), epsilon(1). F(0) has four main subunits: a(1), b(1), b'(1) and c(10-14). The alpha and beta chains form an alternating ring which encloses part of the gamma chain. F(1) is attached to F(0) by a central stalk formed by the gamma and epsilon chains, while a peripheral stalk is formed by the delta, b and b' chains.

Its subcellular location is the cellular thylakoid membrane. Functionally, f(1)F(0) ATP synthase produces ATP from ADP in the presence of a proton or sodium gradient. F-type ATPases consist of two structural domains, F(1) containing the extramembraneous catalytic core and F(0) containing the membrane proton channel, linked together by a central stalk and a peripheral stalk. During catalysis, ATP synthesis in the catalytic domain of F(1) is coupled via a rotary mechanism of the central stalk subunits to proton translocation. In terms of biological role, component of the F(0) channel, it forms part of the peripheral stalk, linking F(1) to F(0). The protein is ATP synthase subunit b of Synechococcus elongatus (strain ATCC 33912 / PCC 7942 / FACHB-805) (Anacystis nidulans R2).